Here is a 443-residue protein sequence, read N- to C-terminus: Tubulin beta-2 chain (443 aa).

The MREI motif signature appears at 1–4; it reads MREI. GTP contacts are provided by glutamine 11, glutamate 69, serine 138, glycine 142, threonine 143, glycine 144, asparagine 204, and asparagine 226. Residue glutamate 69 participates in Mg(2+) binding. A 5-glutamyl polyglutamate modification is found at glutamate 438.

Belongs to the tubulin family. In terms of assembly, dimer of alpha and beta chains. A typical microtubule is a hollow water-filled tube with an outer diameter of 25 nm and an inner diameter of 15 nM. Alpha-beta heterodimers associate head-to-tail to form protofilaments running lengthwise along the microtubule wall with the beta-tubulin subunit facing the microtubule plus end conferring a structural polarity. Microtubules usually have 13 protofilaments but different protofilament numbers can be found in some organisms and specialized cells. Mg(2+) serves as cofactor. Some glutamate residues at the C-terminus are polyglycylated, resulting in polyglycine chains on the gamma-carboxyl group. Glycylation is mainly limited to tubulin incorporated into axonemes (cilia and flagella) whereas glutamylation is prevalent in neuronal cells, centrioles, axonemes, and the mitotic spindle. Both modifications can coexist on the same protein on adjacent residues, and lowering polyglycylation levels increases polyglutamylation, and reciprocally. The precise function of polyglycylation is still unclear. In terms of processing, some glutamate residues at the C-terminus are polyglutamylated, resulting in polyglutamate chains on the gamma-carboxyl group. Polyglutamylation plays a key role in microtubule severing by spastin (SPAST). SPAST preferentially recognizes and acts on microtubules decorated with short polyglutamate tails: severing activity by SPAST increases as the number of glutamates per tubulin rises from one to eight, but decreases beyond this glutamylation threshold. In terms of tissue distribution, nervous system specific.

The protein localises to the cytoplasm. Its subcellular location is the cytoskeleton. In terms of biological role, tubulin is the major constituent of microtubules, a cylinder consisting of laterally associated linear protofilaments composed of alpha- and beta-tubulin heterodimers. Microtubules grow by the addition of GTP-tubulin dimers to the microtubule end, where a stabilizing cap forms. Below the cap, tubulin dimers are in GDP-bound state, owing to GTPase activity of alpha-tubulin. This Xenopus laevis (African clawed frog) protein is Tubulin beta-2 chain (tubb2).